A 226-amino-acid polypeptide reads, in one-letter code: Enolase-phosphatase E1 (226 aa).

It belongs to the HAD-like hydrolase superfamily. MasA/MtnC family. As to quaternary structure, monomer. The cofactor is Mg(2+).

It carries out the reaction 5-methylsulfanyl-2,3-dioxopentyl phosphate + H2O = 1,2-dihydroxy-5-(methylsulfanyl)pent-1-en-3-one + phosphate. The protein operates within amino-acid biosynthesis; L-methionine biosynthesis via salvage pathway; L-methionine from S-methyl-5-thio-alpha-D-ribose 1-phosphate: step 3/6. It functions in the pathway amino-acid biosynthesis; L-methionine biosynthesis via salvage pathway; L-methionine from S-methyl-5-thio-alpha-D-ribose 1-phosphate: step 4/6. Bifunctional enzyme that catalyzes the enolization of 2,3-diketo-5-methylthiopentyl-1-phosphate (DK-MTP-1-P) into the intermediate 2-hydroxy-3-keto-5-methylthiopentenyl-1-phosphate (HK-MTPenyl-1-P), which is then dephosphorylated to form the acireductone 1,2-dihydroxy-3-keto-5-methylthiopentene (DHK-MTPene). The polypeptide is Enolase-phosphatase E1 (Shewanella sp. (strain W3-18-1)).